Consider the following 270-residue polypeptide: Diaminopimelate epimerase (270 aa).

The substrate site is built by Asn-15, Gln-49, and Asn-66. Catalysis depends on Cys-75, which acts as the Proton donor. Substrate-binding positions include 76-77, Asn-155, Asn-187, and 204-205; these read GN and ER. Cys-213 acts as the Proton acceptor in catalysis. Residue 214–215 coordinates substrate; that stretch reads GS.

Belongs to the diaminopimelate epimerase family. In terms of assembly, homodimer.

The protein localises to the cytoplasm. The enzyme catalyses (2S,6S)-2,6-diaminopimelate = meso-2,6-diaminopimelate. It participates in amino-acid biosynthesis; L-lysine biosynthesis via DAP pathway; DL-2,6-diaminopimelate from LL-2,6-diaminopimelate: step 1/1. Catalyzes the stereoinversion of LL-2,6-diaminopimelate (L,L-DAP) to meso-diaminopimelate (meso-DAP), a precursor of L-lysine and an essential component of the bacterial peptidoglycan. The polypeptide is Diaminopimelate epimerase (Rickettsia conorii (strain ATCC VR-613 / Malish 7)).